Reading from the N-terminus, the 148-residue chain is Hemoglobin subunit beta-1 (148 aa).

Residues 3 to 148 (EWTDAERTAI…VVSALCRQYH (146 aa)) enclose the Globin domain. Residues His64 and His93 each contribute to the heme b site.

As to quaternary structure, heterotetramer of two alpha chains and two beta chains. Red blood cells.

Involved in oxygen transport from gills to the various peripheral tissues. The polypeptide is Hemoglobin subunit beta-1 (ba1) (Danio rerio (Zebrafish)).